Here is a 347-residue protein sequence, read N- to C-terminus: NADH-ubiquinone oxidoreductase chain 2 (347 aa).

A run of 10 helical transmembrane segments spans residues 13–33, 59–79, 96–116, 122–142, 144–164, 178–200, 210–232, 246–266, 276–296, and 326–346; these read IVLGTMIVMTSSHWLMIWMGF, YFLTQATASMLLMLAIIINLV, IIMTVALAMKMGLAPFHFWVP, ISLLSGLILLTWQKLAPLSVL, VISPIINLDLLLTMSILSILI, ILAYSSIAHMGWMTSILIFNPMM, LMTATTFTLFMTTSTTTTLALSH, IIMLSLGGLPPLVGFLPKWMI, IILATLMAITALLNLFFYMRL, and LPMLIVLSTMTLPLAPAMILL.

The protein belongs to the complex I subunit 2 family. Core subunit of respiratory chain NADH dehydrogenase (Complex I) which is composed of 45 different subunits. Interacts with TMEM242.

The protein localises to the mitochondrion inner membrane. It carries out the reaction a ubiquinone + NADH + 5 H(+)(in) = a ubiquinol + NAD(+) + 4 H(+)(out). Functionally, core subunit of the mitochondrial membrane respiratory chain NADH dehydrogenase (Complex I) which catalyzes electron transfer from NADH through the respiratory chain, using ubiquinone as an electron acceptor. Essential for the catalytic activity and assembly of complex I. This chain is NADH-ubiquinone oxidoreductase chain 2, found in Rhynchonycteris naso (Brazilian long-nosed bat).